The primary structure comprises 151 residues: FUN14 domain-containing protein 1A (151 aa).

Residues 14 to 17 (YEVL) carry the YXXL motif. The next 3 membrane-spanning stretches (helical) occupy residues 44–64 (YSVA…GFLF), 71–91 (AATA…GGYI), and 130–150 (FVKK…LGLA).

This sequence belongs to the FUN14 family.

Its subcellular location is the mitochondrion outer membrane. Acts as an activator of hypoxia-induced mitophagy, an important mechanism for mitochondrial quality control. This chain is FUN14 domain-containing protein 1A (fundc1-a), found in Xenopus laevis (African clawed frog).